A 253-amino-acid chain; its full sequence is Major prion protein (253 aa).

The first 22 residues, 1–22, serve as a signal peptide directing secretion; the sequence is MANLGCWMLVLFVATWSDLGLC. The tract at residues 23 to 230 is interaction with GRB2, ERI3 and SYN1; it reads KKRPKPGGWN…ESQAYYQRGS (208 aa). The interval 26-108 is disordered; it reads PKPGGWNTGG…WNKPSKPKTS (83 aa). 5 consecutive repeat copies span residues 51 to 59, 60 to 67, 68 to 75, 76 to 83, and 84 to 91. A 5 X 8 AA tandem repeats of P-H-G-G-G-W-G-Q region spans residues 51-91; it reads PQGGGGWGQPHGGGWGQPHGGGWGQPHGGGWGQPHGGGWGQ. Residues 52–95 are compositionally biased toward gly residues; it reads QGGGGWGQPHGGGWGQPHGGGWGQPHGGGWGQPHGGGWGQGGGT. Positions 61, 62, 63, 69, 70, 71, 77, 78, 79, 85, 86, and 87 each coordinate Cu(2+). Cys-179 and Cys-214 form a disulfide bridge. N-linked (GlcNAc...) asparagine glycosylation is found at Asn-181 and Asn-197. Ser-230 is lipidated: GPI-anchor amidated serine. A propeptide spans 231–253 (removed in mature form); the sequence is SMVFFSSPPVILLISFLIFLIVG.

Belongs to the prion family. As to quaternary structure, monomer and homodimer. Has a tendency to aggregate into amyloid fibrils containing a cross-beta spine, formed by a steric zipper of superposed beta-strands. Soluble oligomers may represent an intermediate stage on the path to fibril formation. Copper binding may promote oligomerization. Interacts with GRB2, APP, ERI3/PRNPIP and SYN1. Mislocalized cytosolically exposed PrP interacts with MGRN1; this interaction alters MGRN1 subcellular location and causes lysosomal enlargement. Interacts with KIAA1191.

It localises to the cell membrane. It is found in the golgi apparatus. In terms of biological role, its primary physiological function is unclear. Has cytoprotective activity against internal or environmental stresses. May play a role in neuronal development and synaptic plasticity. May be required for neuronal myelin sheath maintenance. May play a role in iron uptake and iron homeostasis. Soluble oligomers are toxic to cultured neuroblastoma cells and induce apoptosis (in vitro). Association with GPC1 (via its heparan sulfate chains) targets PRNP to lipid rafts. Also provides Cu(2+) or Zn(2+) for the ascorbate-mediated GPC1 deaminase degradation of its heparan sulfate side chains. The protein is Major prion protein (PRNP) of Trachypithecus francoisi (Francois' leaf monkey).